The primary structure comprises 487 residues: Protein translocase subunit SecY (487 aa).

At 1-20 (MSWKDTAEPLLVRMPAVQRP) the chain is on the cytoplasmic side. The chain crosses the membrane as a helical span at residues 21 to 47 (EGHVPFKRKLTWTGGVLLLYFFLTNVK). Residues 48 to 59 (LFGLDIDASQQV) lie on the Extracellular side of the membrane. Residues 60–67 (FGRFSSIL) constitute an intramembrane region (helical). A discontinuously helical membrane pass occupies residues 60-88 (FGRFSSILASGQGSIMQLGIGPIVTASIV). Residues 68–79 (ASGQGSIMQLGI) lie within the membrane without spanning it. The helical intramembrane region spans 80–88 (GPIVTASIV). At 89-110 (LQLLGGADLLGLNTQDDPRDQI) the chain is on the cytoplasmic side. The helical transmembrane segment at 111–135 (LYQGLQKLLVLVMICLTGLPMVFAG) threads the bilayer. Topologically, residues 136–153 (GFLPADTAVANSLGIGTA) are extracellular. Residues 154 to 178 (GVQWLIFAQMFVGGVLILFMDEVIS) traverse the membrane as a helical segment. At 179 to 184 (KWGVGS) the chain is on the cytoplasmic side. The chain crosses the membrane as a helical span at residues 185–203 (GIGLFIVAGVSQRLVGGLL). Topologically, residues 204-244 (TAPFLGNSEGIIYTWYLFITGERGTGPVLAADGLQTVLLQG) are extracellular. A helical transmembrane segment spans residues 245–266 (ELLGLFTTVLIFAVVVYAESVR). The Cytoplasmic segment spans residues 267-291 (VEIPLSNARVKGARGRFPVKLIYAS). A helical transmembrane segment spans residues 292–313 (VLPMILVRALQANIQFLGRILN). Residues 314 to 364 (AQLGSMPAFLGTYANGQPTGGLFYFLAPIQSRGDWMWWLEGTAQPVWQILT) are Extracellular-facing. The chain crosses the membrane as a helical span at residues 365-384 (RVGIDLFVMLVGGAVFAVFW). The Cytoplasmic segment spans residues 385–427 (VETTDMGPEATAKQIHNSGMQIPGFRQNVGVIEKVLERYIPQV). Residues 428 to 446 (TVIGGALVGLLAVMANMLG) traverse the membrane as a helical segment. The Extracellular portion of the chain corresponds to 447–451 (TIGGV). The chain crosses the membrane as a helical span at residues 452–466 (SGTGLLLTVSITYKL). Over 467-487 (YEEIAEEQLMEMHPMMRQMFG) the chain is Cytoplasmic.

This sequence belongs to the SecY/SEC61-alpha family. As to quaternary structure, component of the Sec protein translocase complex. Heterotrimer consisting of alpha (SecY), beta (SecG) and gamma (SecE) subunits. The heterotrimers can form oligomers, although 1 heterotrimer is thought to be able to translocate proteins. Interacts with the ribosome. May interact with SecDF, and other proteins may be involved.

The protein localises to the cell membrane. In terms of biological role, the central subunit of the protein translocation channel SecYEG. Consists of two halves formed by TMs 1-5 and 6-10. These two domains form a lateral gate at the front which open onto the bilayer between TMs 2 and 7, and are clamped together by SecE at the back. The channel is closed by both a pore ring composed of hydrophobic SecY resides and a short helix (helix 2A) on the extracellular side of the membrane which forms a plug. The plug probably moves laterally to allow the channel to open. The ring and the pore may move independently. The polypeptide is Protein translocase subunit SecY (Haloarcula marismortui (strain ATCC 43049 / DSM 3752 / JCM 8966 / VKM B-1809) (Halobacterium marismortui)).